The primary structure comprises 167 residues: MRVPQHYKKPGWQRFFAGMMCGAVISWFFFLFTYGTFQEEQVSLIEKQKEHVKDLNNQISIYQEDLHKLNEDNKRKLLIQSVSVKLLNGDKYKISQPDKTKFEEHVKDDISEVITKDIESVYQTKDLLKRTIENKVYMINEKKYEATVRELIIYTRLTVELEISFAT.

The chain crosses the membrane as a helical span at residues 15–35; the sequence is FFAGMMCGAVISWFFFLFTYG.

It localises to the cell membrane. Its function is as follows. Involved in sporulation. This Bacillus subtilis (strain 168) protein is Sporulation membrane protein YtrI (ytrI).